The sequence spans 880 residues: Alanine--tRNA ligase (880 aa).

Zn(2+) contacts are provided by His566, His570, Cys668, and His672.

This sequence belongs to the class-II aminoacyl-tRNA synthetase family. The cofactor is Zn(2+).

The protein localises to the cytoplasm. The catalysed reaction is tRNA(Ala) + L-alanine + ATP = L-alanyl-tRNA(Ala) + AMP + diphosphate. In terms of biological role, catalyzes the attachment of alanine to tRNA(Ala) in a two-step reaction: alanine is first activated by ATP to form Ala-AMP and then transferred to the acceptor end of tRNA(Ala). Also edits incorrectly charged Ser-tRNA(Ala) and Gly-tRNA(Ala) via its editing domain. The polypeptide is Alanine--tRNA ligase (Parafrankia sp. (strain EAN1pec)).